Reading from the N-terminus, the 355-residue chain is Uroporphyrinogen decarboxylase (355 aa).

Substrate is bound by residues 27 to 31 (RQAGR), Asp-77, Tyr-154, Thr-209, and His-328.

It belongs to the uroporphyrinogen decarboxylase family. Homodimer.

Its subcellular location is the cytoplasm. It catalyses the reaction uroporphyrinogen III + 4 H(+) = coproporphyrinogen III + 4 CO2. It participates in porphyrin-containing compound metabolism; protoporphyrin-IX biosynthesis; coproporphyrinogen-III from 5-aminolevulinate: step 4/4. Functionally, catalyzes the decarboxylation of four acetate groups of uroporphyrinogen-III to yield coproporphyrinogen-III. This Colwellia psychrerythraea (strain 34H / ATCC BAA-681) (Vibrio psychroerythus) protein is Uroporphyrinogen decarboxylase.